The primary structure comprises 253 residues: Anamorsin homolog (253 aa).

The segment at 4–129 is N-terminal SAM-like domain; that stretch reads FKGLQKSLYI…ETGSSARLSF (126 aa). Positions 130–161 are linker; it reads AKKNSSTLNVWKISGDDDELIDEEDLLDEVDK. The [2Fe-2S] cluster site is built by C172, C181, C184, and C186. The interval 172–186 is fe-S binding site A; sequence CSTTGKRKACKNCSC. [4Fe-4S] cluster contacts are provided by C214, C217, C225, and C228. 2 consecutive short sequence motifs (cx2C motif) follow at residues 214–217 and 225–228; these read CGNC and CSSC. The tract at residues 214–228 is fe-S binding site B; the sequence is CGNCYLGDAFRCSSC.

Belongs to the anamorsin family. As to quaternary structure, monomer. It depends on [2Fe-2S] cluster as a cofactor. The cofactor is [4Fe-4S] cluster.

It localises to the cytoplasm. It is found in the mitochondrion intermembrane space. Component of the cytosolic iron-sulfur (Fe-S) protein assembly (CIA) machinery. Required for the maturation of extramitochondrial Fe-S proteins. Part of an electron transfer chain functioning in an early step of cytosolic Fe-S biogenesis, facilitating the de novo assembly of a [4Fe-4S] cluster on the cytosolic Fe-S scaffold complex. Electrons are transferred from NADPH via a FAD- and FMN-containing diflavin oxidoreductase. Together with the diflavin oxidoreductase, also required for the assembly of the diferric tyrosyl radical cofactor of ribonucleotide reductase (RNR), probably by providing electrons for reduction during radical cofactor maturation in the catalytic small subunit. This is Anamorsin homolog from Drosophila willistoni (Fruit fly).